A 492-amino-acid polypeptide reads, in one-letter code: Catalase (492 aa).

Residues histidine 65 and asparagine 138 contribute to the active site. Tyrosine 348 contacts heme.

This sequence belongs to the catalase family. Homotetramer. Heme serves as cofactor.

It is found in the cytoplasm. The protein localises to the cytosol. Its subcellular location is the peroxisome matrix. It catalyses the reaction 2 H2O2 = O2 + 2 H2O. In terms of biological role, catalyzes the degradation of hydrogen peroxide (H(2)O(2)) generated by peroxisomal oxidases to water and oxygen, thereby protecting cells from the toxic effects of hydrogen peroxide. This is Catalase from Helianthus annuus (Common sunflower).